The primary structure comprises 1696 residues: uncharacterized protein (1696 aa).

4 disordered regions span residues 1-113, 151-194, 258-284, and 299-376; these read MDSS…HPQY, DSWT…SRSR, DVTR…PEKK, and GRRE…KQRG. Pro residues predominate over residues 21-42; that stretch reads LHPPSAPLPPPPPLPPPPPPRQ. Residues 52-61 are compositionally biased toward polar residues; that stretch reads GRSTQSNGQR. Residues 96-113 show a composition bias toward low complexity; the sequence is QQQHQPLSLQQQQQHPQY. A compositionally biased stretch (polar residues) spans 170–183; the sequence is RNYQYDYSRNSSGV. 3 stretches are compositionally biased toward basic and acidic residues: residues 267–284, 325–340, and 358–376; these read EGAR…PEKK, ETPR…EWSR, and RGKE…KQRG. Position 378 is a phosphoserine (Ser378). Disordered regions lie at residues 419 to 483, 688 to 724, 1063 to 1090, 1184 to 1211, 1319 to 1340, 1361 to 1429, and 1658 to 1696; these read RALL…GGKL, SDIG…LDSP, IKHK…GGTS, TSKS…VAGS, GEAV…SGVR, VVSV…SDAS, and SESR…DSGM. Basic and acidic residues-rich tracts occupy residues 421–436 and 695–704; these read LLSD…ERNG and DDNKRIDKNV. Residue Ser708 is modified to Phosphoserine. Basic and acidic residues predominate over residues 1184–1204; it reads TSKSIEKIESSGGTSEHRTPE. Over residues 1361–1370 the composition is skewed to basic and acidic residues; the sequence is VVSVPHRDPQ. Composition is skewed to polar residues over residues 1389-1398, 1658-1667, and 1677-1696; these read NYSTQKSYPS, SESRCNQSIS, and SAAN…DSGM.

This is an uncharacterized protein from Arabidopsis thaliana (Mouse-ear cress).